The following is a 503-amino-acid chain: UDP-N-acetylmuramate--L-alanine ligase (503 aa).

Positions 1-22 (MIKQTHVSNSSNNSTNSTAAQV) are disordered. Low complexity predominate over residues 8–18 (SNSSNNSTNST). Residue 135-141 (GTHGKTT) coordinates ATP.

This sequence belongs to the MurCDEF family.

The protein localises to the cytoplasm. It catalyses the reaction UDP-N-acetyl-alpha-D-muramate + L-alanine + ATP = UDP-N-acetyl-alpha-D-muramoyl-L-alanine + ADP + phosphate + H(+). It functions in the pathway cell wall biogenesis; peptidoglycan biosynthesis. Cell wall formation. The chain is UDP-N-acetylmuramate--L-alanine ligase from Colwellia psychrerythraea (strain 34H / ATCC BAA-681) (Vibrio psychroerythus).